A 402-amino-acid chain; its full sequence is uncharacterized protein (402 aa).

Residues 1–12 lie on the Cytoplasmic side of the membrane; it reads MFQQLSASIRHN. A helical membrane pass occupies residues 13–33; it reads AHIIFLCISWYFISSLASQVT. Residues 34-50 lie on the Extracellular side of the membrane; it reads KQVLTVCPLPLFLGEFQ. Residues 51–71 form a helical membrane-spanning segment; that stretch reads FIYTAVLAWFTCYIAYSFPGF. The Cytoplasmic segment spans residues 72–103; the sequence is YRIFPNGTFPEYYIDDRETSRAARKESKLSSL. Residues 104–124 traverse the membrane as a helical segment; it reads IIPPSKPILQTVLPLGLFQFV. The Extracellular portion of the chain corresponds to 125–134; sequence GKYFGHTATS. Residues 135 to 155 traverse the membrane as a helical segment; it reads LVPVSTVASIKTLSPMFILLL. At 156 to 165 the chain is on the cytoplasmic side; that stretch reads QKILKISTLK. A helical membrane pass occupies residues 166–186; it reads ITLTLIFSLCTLVLGVWIIVQ. Residues 187 to 206 lie on the Extracellular side of the membrane; sequence EDNRSPASSNELREFSKYGV. A helical transmembrane segment spans residues 207–227; the sequence is ICAMISMFIFVLQNIYGKTVF. Over 228–271 the chain is Cytoplasmic; sequence TYRSQTDESQSNSGFSRQESPLPLYEKLDEKLVAKKKPKSYDKL. The chain crosses the membrane as a helical span at residues 272–292; it reads TLMIYISLVGFCLSFGWFITL. The Extracellular portion of the chain corresponds to 293 to 353; sequence EFPVLFRYFF…TYSIANLMKR (61 aa). A helical transmembrane segment spans residues 354–374; it reads FAIIAVSWVFIGRRITWLQVF. The Cytoplasmic segment spans residues 375 to 402; sequence GLVLNTLGLFLYERCTSQSKIKAKIRPE.

Belongs to the TPT transporter family.

The protein localises to the membrane. This is an uncharacterized protein from Saccharomyces cerevisiae (strain ATCC 204508 / S288c) (Baker's yeast).